A 721-amino-acid chain; its full sequence is Peroxisomal fatty acid beta-oxidation multifunctional protein AIM1 (721 aa).

The Nucleophile role is filled by Glu-116. Glu-136 serves as the catalytic Proton acceptor. The Microbody targeting signal motif lies at 719 to 721 (SKL).

This sequence in the N-terminal section; belongs to the enoyl-CoA hydratase/isomerase family. It in the central section; belongs to the 3-hydroxyacyl-CoA dehydrogenase family. In terms of tissue distribution, widely expressed.

The protein localises to the peroxisome. The catalysed reaction is a (3S)-3-hydroxyacyl-CoA = a (2E)-enoyl-CoA + H2O. It catalyses the reaction a 4-saturated-(3S)-3-hydroxyacyl-CoA = a (3E)-enoyl-CoA + H2O. The enzyme catalyses (3S)-3-hydroxybutanoyl-CoA = (2E)-butenoyl-CoA + H2O. It carries out the reaction (3S)-hydroxyoctanoyl-CoA = (2E)-octenoyl-CoA + H2O. The catalysed reaction is (3S)-3-hydroxydodecanoyl-CoA = (2E)-dodecenoyl-CoA + H2O. It catalyses the reaction (3S)-hydroxytetradecanoyl-CoA = (2E)-tetradecenoyl-CoA + H2O. The enzyme catalyses (3S)-hydroxyhexanoyl-CoA = (2E)-hexenoyl-CoA + H2O. It carries out the reaction a (3Z)-enoyl-CoA = a 4-saturated (2E)-enoyl-CoA. The catalysed reaction is a (3E)-enoyl-CoA = a 4-saturated (2E)-enoyl-CoA. It catalyses the reaction (3S)-3-hydroxybutanoyl-CoA = (3R)-3-hydroxybutanoyl-CoA. The enzyme catalyses a (3S)-3-hydroxyacyl-CoA + NAD(+) = a 3-oxoacyl-CoA + NADH + H(+). It carries out the reaction (3S)-3-hydroxybutanoyl-CoA + NAD(+) = acetoacetyl-CoA + NADH + H(+). The catalysed reaction is (3S)-hydroxyhexanoyl-CoA + NAD(+) = 3-oxohexanoyl-CoA + NADH + H(+). It catalyses the reaction (3S)-hydroxyoctanoyl-CoA + NAD(+) = 3-oxooctanoyl-CoA + NADH + H(+). The enzyme catalyses (3S)-3-hydroxydodecanoyl-CoA + NAD(+) = 3-oxododecanoyl-CoA + NADH + H(+). It carries out the reaction (3S)-hydroxytetradecanoyl-CoA + NAD(+) = 3-oxotetradecanoyl-CoA + NADH + H(+). It functions in the pathway lipid metabolism; fatty acid beta-oxidation. In terms of biological role, involved in peroxisomal fatty acid beta-oxidation. Required for wound-induced jasmonate biosynthesis. Possesses enoyl-CoA hydratase activity against short chain substrates (C4-C6) and 3-hydroxyacyl-CoA dehydrogenase activity against chains of variable sizes (C6-C16). Possesses cinnamoyl-CoA hydratase activity and is involved in the peroxisomal beta-oxidation pathway for the biosynthesis of benzoic acid (BA). Required for the accumulation in seeds of benzoylated glucosinolates (BGs) and substituted hydroxybenzoylated choline esters, which are BA-containing secondary metabolites. Required for salicylic acid (SA) in seeds. This chain is Peroxisomal fatty acid beta-oxidation multifunctional protein AIM1 (AIM1), found in Arabidopsis thaliana (Mouse-ear cress).